We begin with the raw amino-acid sequence, 213 residues long: Protein-L-isoaspartate O-methyltransferase (213 aa).

Ser-62 is a catalytic residue.

The protein belongs to the methyltransferase superfamily. L-isoaspartyl/D-aspartyl protein methyltransferase family.

The protein resides in the cytoplasm. The catalysed reaction is [protein]-L-isoaspartate + S-adenosyl-L-methionine = [protein]-L-isoaspartate alpha-methyl ester + S-adenosyl-L-homocysteine. Catalyzes the methyl esterification of L-isoaspartyl residues in peptides and proteins that result from spontaneous decomposition of normal L-aspartyl and L-asparaginyl residues. It plays a role in the repair and/or degradation of damaged proteins. This is Protein-L-isoaspartate O-methyltransferase from Idiomarina loihiensis (strain ATCC BAA-735 / DSM 15497 / L2-TR).